The chain runs to 153 residues: Regulator of sigma D (153 aa).

Belongs to the Rsd/AlgQ family. Interacts with RpoD.

It localises to the cytoplasm. Binds RpoD and negatively regulates RpoD-mediated transcription activation by preventing the interaction between the primary sigma factor RpoD with the catalytic core of the RNA polymerase and with promoter DNA. May be involved in replacement of the RNA polymerase sigma subunit from RpoD to RpoS during the transition from exponential growth to the stationary phase. The protein is Regulator of sigma D of Pectobacterium carotovorum subsp. carotovorum (strain PC1).